We begin with the raw amino-acid sequence, 363 residues long: RNA polymerase I-specific transcription initiation factor RRN5 (363 aa).

The disordered stretch occupies residues 301 to 344 (LSRRDAPPVHQDENQENQENQENQEQDNTASEGESEAERDEIDE). Positions 302–313 (SRRDAPPVHQDE) are enriched in basic and acidic residues. A compositionally biased stretch (low complexity) spans 317–328 (NQENQENQEQDN). Acidic residues predominate over residues 333–344 (GESEAERDEIDE).

In terms of assembly, component of the UAF (upstream activation factor) complex which consists of UAF30, RRN5, RRN9, RRN10, and histones H3 and H4.

Its subcellular location is the nucleus. The protein localises to the nucleolus. In terms of biological role, component of the UAF (upstream activation factor) complex which interacts with the upstream element of the RNA polymerase I promoter and forms a stable preinitiation complex. Together with SPT15/TBP UAF seems to stimulate basal transcription to a fully activated level. In Saccharomyces cerevisiae (strain ATCC 204508 / S288c) (Baker's yeast), this protein is RNA polymerase I-specific transcription initiation factor RRN5 (RRN5).